The primary structure comprises 180 residues: Adenine phosphoribosyltransferase (180 aa).

It belongs to the purine/pyrimidine phosphoribosyltransferase family. Homodimer.

It is found in the cytoplasm. The catalysed reaction is AMP + diphosphate = 5-phospho-alpha-D-ribose 1-diphosphate + adenine. It functions in the pathway purine metabolism; AMP biosynthesis via salvage pathway; AMP from adenine: step 1/1. Functionally, catalyzes a salvage reaction resulting in the formation of AMP, that is energically less costly than de novo synthesis. The chain is Adenine phosphoribosyltransferase from Mannheimia succiniciproducens (strain KCTC 0769BP / MBEL55E).